Consider the following 61-residue polypeptide: Bactridin-1 (61 aa).

The LCN-type CS-alpha/beta domain occupies 1-61 (KDGYIIEHRG…KIFDSNNLKC (61 aa)). Disulfide bonds link Cys11–Cys61, Cys15–Cys37, Cys23–Cys42, and Cys27–Cys44.

Belongs to the long (4 C-C) scorpion toxin superfamily. Sodium channel inhibitor family. Beta subfamily. In terms of tissue distribution, expressed by the venom gland.

It localises to the secreted. Its function is as follows. Shows antibacterial activity against both Gram-positive bacteria (B.subtilis, M.luteus, E.faecalis) and Gram-negative bacteria (P.aeruginosa, Y.enterocolitica, A.calcoaceticus). Modifies membrane sodium permeability on Y.enterocolitica. Is toxic to cockroaches and crabs, but is not toxic to mice. Does not induce haemolysis in human erythrocytes. Acts by inhibiting the sodium (Nav) currents. In Tityus discrepans (Venezuelan scorpion), this protein is Bactridin-1.